The sequence spans 161 residues: Protein PLANT CADMIUM RESISTANCE 12 (161 aa).

A helical transmembrane segment spans residues 71–89 (AGLIHLALGFIGCSWLYAF).

The protein belongs to the cornifelin family.

Its subcellular location is the membrane. May be involved in heavy metals transport. The protein is Protein PLANT CADMIUM RESISTANCE 12 (PCR12) of Arabidopsis thaliana (Mouse-ear cress).